The following is a 208-amino-acid chain: Probable nicotinate-nucleotide adenylyltransferase (208 aa).

It belongs to the NadD family.

The enzyme catalyses nicotinate beta-D-ribonucleotide + ATP + H(+) = deamido-NAD(+) + diphosphate. It participates in cofactor biosynthesis; NAD(+) biosynthesis; deamido-NAD(+) from nicotinate D-ribonucleotide: step 1/1. Its function is as follows. Catalyzes the reversible adenylation of nicotinate mononucleotide (NaMN) to nicotinic acid adenine dinucleotide (NaAD). This is Probable nicotinate-nucleotide adenylyltransferase from Trichormus variabilis (strain ATCC 29413 / PCC 7937) (Anabaena variabilis).